The following is a 199-amino-acid chain: Protein MM_0484 (199 aa).

Positions 5 to 196 (TEGRAAVKLA…EKEPDGEVIE (192 aa)) constitute an AMMECR1 domain.

This is Protein MM_0484 from Methanosarcina mazei (strain ATCC BAA-159 / DSM 3647 / Goe1 / Go1 / JCM 11833 / OCM 88) (Methanosarcina frisia).